The chain runs to 326 residues: Glyceraldehyde-3-phosphate dehydrogenase, cytosolic (326 aa).

NAD(+) contacts are provided by residues 2 to 3 (RI), Asp-24, and Arg-71. D-glyceraldehyde 3-phosphate is bound by residues 142–144 (SCT), Thr-173, 202–203 (TG), and Arg-225. Cys-143 serves as the catalytic Nucleophile. Position 307 (Asn-307) interacts with NAD(+).

Belongs to the glyceraldehyde-3-phosphate dehydrogenase family.

The protein resides in the cytoplasm. The catalysed reaction is D-glyceraldehyde 3-phosphate + phosphate + NAD(+) = (2R)-3-phospho-glyceroyl phosphate + NADH + H(+). The protein operates within carbohydrate degradation; glycolysis; pyruvate from D-glyceraldehyde 3-phosphate: step 1/5. Functionally, key enzyme in glycolysis that catalyzes the first step of the pathway by converting D-glyceraldehyde 3-phosphate (G3P) into 3-phospho-D-glyceroyl phosphate. Essential for the maintenance of cellular ATP levels and carbohydrate metabolism. The sequence is that of Glyceraldehyde-3-phosphate dehydrogenase, cytosolic (GAPC) from Nicotiana tabacum (Common tobacco).